The chain runs to 310 residues: Inorganic pyrophosphatase, mitochondrial (310 aa).

A mitochondrion-targeting transit peptide spans 1–30 (MNLLRMNALTSKARSIERLKQTLNILSIRN). The Mg(2+) site is built by Asp-152, Asp-157, and Asp-189.

The protein belongs to the PPase family. In terms of assembly, homodimer that binds non-covalently to a protein complex in the inner mitochondrial membrane. Mg(2+) is required as a cofactor.

The protein resides in the mitochondrion. It catalyses the reaction diphosphate + H2O = 2 phosphate + H(+). Involved in energy production. Its activity is stimulated by uncouplers of ATP synthesis. The chain is Inorganic pyrophosphatase, mitochondrial (PPA2) from Saccharomyces cerevisiae (strain ATCC 204508 / S288c) (Baker's yeast).